We begin with the raw amino-acid sequence, 272 residues long: Phosphatidylglycerol--prolipoprotein diacylglyceryl transferase (272 aa).

The next 4 membrane-spanning stretches (helical) occupy residues 24–44 (WYGIAYVLALLVALWVAKWIA), 59–79 (YFIWVEVGVILGARLGYILFY), 102–122 (FIGIRGMSYHGAVIGFLIASF), and 129–149 (GVKFWMLMDLVGISVPLGYVF). Arg151 provides a ligand contact to a 1,2-diacyl-sn-glycero-3-phospho-(1'-sn-glycerol). Transmembrane regions (helical) follow at residues 180 to 200 (PSQLYEAFLEGIVLFVILYAW), 208 to 228 (GQLGIMYLILYALARFVAEFW), and 244 to 264 (MGQLLSLAMAIPCLVLWGYLA).

The protein belongs to the Lgt family.

It is found in the cell inner membrane. It catalyses the reaction L-cysteinyl-[prolipoprotein] + a 1,2-diacyl-sn-glycero-3-phospho-(1'-sn-glycerol) = an S-1,2-diacyl-sn-glyceryl-L-cysteinyl-[prolipoprotein] + sn-glycerol 1-phosphate + H(+). It functions in the pathway protein modification; lipoprotein biosynthesis (diacylglyceryl transfer). In terms of biological role, catalyzes the transfer of the diacylglyceryl group from phosphatidylglycerol to the sulfhydryl group of the N-terminal cysteine of a prolipoprotein, the first step in the formation of mature lipoproteins. This chain is Phosphatidylglycerol--prolipoprotein diacylglyceryl transferase, found in Wolinella succinogenes (strain ATCC 29543 / DSM 1740 / CCUG 13145 / JCM 31913 / LMG 7466 / NCTC 11488 / FDC 602W) (Vibrio succinogenes).